The primary structure comprises 179 residues: MPKLSIVVAPDERLTTRASEVTGINDKIKELVNDMFETMYNAEGLGLAAVQIGVLKRIFVMDIQLEDIKGEPVGYESTGKFCMINPEITELSDEQVILKEGCLSIPEQSHEIRRPKYLTVKYKDLNNKEQTLKASGWLARCIQHELDHLNGILYIRHLSKLKYDMAMKKAEKFKRHYER.

Fe cation-binding residues include C102 and H144. E145 is an active-site residue. H148 lines the Fe cation pocket.

This sequence belongs to the polypeptide deformylase family. The cofactor is Fe(2+).

The catalysed reaction is N-terminal N-formyl-L-methionyl-[peptide] + H2O = N-terminal L-methionyl-[peptide] + formate. Removes the formyl group from the N-terminal Met of newly synthesized proteins. Requires at least a dipeptide for an efficient rate of reaction. N-terminal L-methionine is a prerequisite for activity but the enzyme has broad specificity at other positions. The polypeptide is Peptide deformylase (Wolbachia sp. subsp. Brugia malayi (strain TRS)).